The sequence spans 623 residues: MDFKYDVIVIGAGHAGCEAAAAAANMGSKTCLITMDMNKIGQMSCNPAVGGIAKGQIVREIDALGGYMGLVTDRTAIQFRMLNRSKGPAMWSPRAQCDRGKFIWAWREILENTPNLHIWQDTVEELIVENGEATGVMTCWGVTFHAKCIVLTAGTFLNGLMHIGHKQLAGGRMAEPASYHLTESITRHGITAGRMKTGTPVRIDGRSVHYDLMETQDGENDFHRFSFMSEPRKLKQLQCWTCFTNEEVHEILRKGLPDSPLFNGQIQSIGPRYCPSIETKIVTFPDKPQHQLFLEPEGETTQELYLNGFSSSLPMDIQLAALKKVPAFKDLVVYRPGYAIEYDYFDPTQLKHTLESKIIKNLFLAGQVNGTTGYEEAGGQGIIAGINAHINCHGGEPFTLGRDEAYIGVLIDDLVTKGVDEPYRMFTSRAEYRILLRQDDADMRLTERAYKLGLVKQDRYEHLCSKREAVNQIIDFAKTFSIKAALINDALESLGTARLTHGCKLIDLLNRPQITIENIAGHIPAFKAMLDQITDRKEEVIEAAEVLIKYQGYIDRERMIADKIHRLEAIRIKGKFDYNSLNSLSTEARQKLMKIDPETLAQASRIPGISPSDINVLLVLLGR.

Residues 11–16, V123, and S178 contribute to the FAD site; that span reads GAGHAG. 270–284 contacts NAD(+); it reads GPRYCPSIETKIVTF. Q367 is a binding site for FAD.

The protein belongs to the MnmG family. Homodimer. Heterotetramer of two MnmE and two MnmG subunits. FAD is required as a cofactor.

Its subcellular location is the cytoplasm. Functionally, NAD-binding protein involved in the addition of a carboxymethylaminomethyl (cmnm) group at the wobble position (U34) of certain tRNAs, forming tRNA-cmnm(5)s(2)U34. This chain is tRNA uridine 5-carboxymethylaminomethyl modification enzyme MnmG, found in Phocaeicola vulgatus (strain ATCC 8482 / DSM 1447 / JCM 5826 / CCUG 4940 / NBRC 14291 / NCTC 11154) (Bacteroides vulgatus).